A 412-amino-acid polypeptide reads, in one-letter code: Protein MT3510 (412 aa).

K227 is modified (N6-(pyridoxal phosphate)lysine).

Belongs to the DegT/DnrJ/EryC1 family.

This is Protein MT3510 from Mycobacterium tuberculosis (strain CDC 1551 / Oshkosh).